The sequence spans 793 residues: Protein translocase subunit SecA 2 (793 aa).

ATP contacts are provided by residues Gln77, 95–99 (GEGKT), and Asp493.

This sequence belongs to the SecA family. Monomer and homodimer (Potential). Part of the accessory SecA2/SecY2 protein translocation apparatus required to export cell wall protein GspB.

The protein localises to the cell membrane. It is found in the cytoplasm. It carries out the reaction ATP + H2O + cellular proteinSide 1 = ADP + phosphate + cellular proteinSide 2.. In terms of biological role, part of the accessory SecA2/SecY2 system specifically required to export GspB, a serine-rich repeat cell wall protein encoded upstream in the same operon. The chain is Protein translocase subunit SecA 2 from Streptococcus gordonii.